A 509-amino-acid polypeptide reads, in one-letter code: Probable cytochrome P450 4ac1 (509 aa).

The heme site is built by glutamate 317 and cysteine 454.

The protein belongs to the cytochrome P450 family. Requires heme as cofactor.

It localises to the endoplasmic reticulum membrane. The protein localises to the microsome membrane. May be involved in the metabolism of insect hormones and in the breakdown of synthetic insecticides. This Drosophila melanogaster (Fruit fly) protein is Probable cytochrome P450 4ac1 (Cyp4ac1).